The following is a 692-amino-acid chain: Proprotein convertase subtilisin/kexin type 9 (692 aa).

Residues 1–30 (MGTVSSRRSWWPLPLLLLLLLLLGPAGARA) form the signal peptide. The propeptide occupies 31–152 (QEDEDGDYEE…IEEDSSVFAQ (122 aa)). Sulfotyrosine is present on Tyr-38. Ser-47 carries the post-translational modification Phosphoserine. In terms of domain architecture, Inhibitor I9 spans 77 to 149 (TYVVVLKEET…VDYIEEDSSV (73 aa)). A Peptidase S8 domain is found at 155–461 (PWNLERITPP…GWQLFCRTVW (307 aa)). Catalysis depends on charge relay system residues Asp-186 and His-226. Cystine bridges form between Cys-223–Cys-255 and Cys-323–Cys-358. Catalysis depends on Ser-386, which acts as the Charge relay system. The segment at 450–692 (GAGWQLFCRT…HLAQASQELQ (243 aa)) is C-terminal domain. 3 disulfides stabilise this stretch: Cys-457-Cys-527, Cys-477-Cys-526, and Cys-486-Cys-509. Asn-533 carries an N-linked (GlcNAc...) asparagine glycan. 6 disulfides stabilise this stretch: Cys-534-Cys-601, Cys-552-Cys-600, Cys-562-Cys-588, Cys-608-Cys-679, Cys-626-Cys-678, and Cys-635-Cys-654. At Ser-688 the chain carries Phosphoserine.

This sequence belongs to the peptidase S8 family. As to quaternary structure, monomer. Can self-associate to form dimers and higher multimers which may have increased LDLR degrading activity. The precursor protein but not the mature protein may form multimers. Interacts with APOB, VLDLR, LRP8/APOER2 and BACE1. The full-length immature form (pro-PCSK9) interacts with SCNN1A, SCNN1B and SCNN1G. The pro-PCSK9 form (via C-terminal domain) interacts with LDLR. Interacts (via the C-terminal domain) with ANXA2 (via repeat Annexin 1); the interaction inhibits the degradation of LDLR. Ca(2+) serves as cofactor. In terms of processing, cleavage by furin and PCSK5 generates a truncated inactive protein that is unable to induce LDLR degradation. Post-translationally, undergoes autocatalytic cleavage in the endoplasmic reticulum to release the propeptide from the N-terminus and the cleavage of the propeptide is strictly required for its maturation and activation. The cleaved propeptide however remains associated with the catalytic domain through non-covalent interactions, preventing potential substrates from accessing its active site. As a result, it is secreted from cells as a propeptide-containing, enzymatically inactive protein. Phosphorylation protects the propeptide against proteolysis.

It is found in the cytoplasm. Its subcellular location is the secreted. The protein resides in the endosome. It localises to the lysosome. The protein localises to the cell surface. It is found in the endoplasmic reticulum. Its subcellular location is the golgi apparatus. With respect to regulation, its proteolytic activity is autoinhibited by the non-covalent binding of the propeptide to the catalytic domain. Inhibited by EGTA. Functionally, crucial player in the regulation of plasma cholesterol homeostasis. Binds to low-density lipid receptor family members: low density lipoprotein receptor (LDLR), very low density lipoprotein receptor (VLDLR), apolipoprotein E receptor (LRP1/APOER) and apolipoprotein receptor 2 (LRP8/APOER2), and promotes their degradation in intracellular acidic compartments. Acts via a non-proteolytic mechanism to enhance the degradation of the hepatic LDLR through a clathrin LDLRAP1/ARH-mediated pathway. May prevent the recycling of LDLR from endosomes to the cell surface or direct it to lysosomes for degradation. Can induce ubiquitination of LDLR leading to its subsequent degradation. Inhibits intracellular degradation of APOB via the autophagosome/lysosome pathway in a LDLR-independent manner. Involved in the disposal of non-acetylated intermediates of BACE1 in the early secretory pathway. Inhibits epithelial Na(+) channel (ENaC)-mediated Na(+) absorption by reducing ENaC surface expression primarily by increasing its proteasomal degradation. Regulates neuronal apoptosis via modulation of LRP8/APOER2 levels and related anti-apoptotic signaling pathways. The chain is Proprotein convertase subtilisin/kexin type 9 (PCSK9) from Pan troglodytes (Chimpanzee).